The chain runs to 326 residues: N-acetyl-gamma-glutamyl-phosphate reductase (326 aa).

Residue cysteine 155 is part of the active site.

The protein belongs to the NAGSA dehydrogenase family. Type 1 subfamily.

The protein localises to the cytoplasm. The catalysed reaction is N-acetyl-L-glutamate 5-semialdehyde + phosphate + NADP(+) = N-acetyl-L-glutamyl 5-phosphate + NADPH + H(+). It functions in the pathway amino-acid biosynthesis; L-arginine biosynthesis; N(2)-acetyl-L-ornithine from L-glutamate: step 3/4. Functionally, catalyzes the NADPH-dependent reduction of N-acetyl-5-glutamyl phosphate to yield N-acetyl-L-glutamate 5-semialdehyde. This Shewanella loihica (strain ATCC BAA-1088 / PV-4) protein is N-acetyl-gamma-glutamyl-phosphate reductase.